The sequence spans 246 residues: NAD-dependent protein deacetylase (246 aa).

Positions 1-246 (MKKPDIQQLK…VIEEIVNSNS (246 aa)) constitute a Deacetylase sirtuin-type domain. NAD(+) contacts are provided by alanine 25, phenylalanine 36, arginine 37, glutamine 106, isoleucine 108, aspartate 109, and histidine 124. Phenylalanine 36 serves as a coordination point for nicotinamide. Positions 108 and 109 each coordinate nicotinamide. Histidine 124 functions as the Proton acceptor in the catalytic mechanism. 4 residues coordinate Zn(2+): cysteine 132, cysteine 135, cysteine 152, and cysteine 155. NAD(+) is bound by residues serine 193, serine 194, asparagine 216, and aspartate 233.

It belongs to the sirtuin family. Class U subfamily. It depends on Zn(2+) as a cofactor.

The protein localises to the cytoplasm. The catalysed reaction is N(6)-acetyl-L-lysyl-[protein] + NAD(+) + H2O = 2''-O-acetyl-ADP-D-ribose + nicotinamide + L-lysyl-[protein]. Its function is as follows. NAD-dependent protein deacetylase which modulates the activities of several enzymes which are inactive in their acetylated form. The sequence is that of NAD-dependent protein deacetylase from Staphylococcus epidermidis (strain ATCC 12228 / FDA PCI 1200).